The chain runs to 376 residues: 2-hydroxypropyl-CoM lyase (376 aa).

His-218, Cys-220, and Cys-341 together coordinate Zn(2+).

The protein belongs to the vitamin-B12 independent methionine synthase family. Homohexamer. Component I of the aliphatic epoxide carboxylation complex together with components II, III and IV. Requires Zn(2+) as cofactor.

The catalysed reaction is (R)-2-hydroxypropyl-coenzyme M = (R)-1,2-epoxypropane + coenzyme M. The enzyme catalyses (S)-2-hydroxypropyl-coenzyme M = (S)-1,2-epoxypropane + coenzyme M. It participates in alkene metabolism; propylene degradation. Inhibited by methylepoxypropane. Inhibited by the zinc chelator 4-(2-pyridylazo)resorcinol (PAR), in the presence of p- (hydroxymercuri)benzenesulfonic acid (PMPS), and by EDTA. Not inhibited by the coenzyme M analog 2-bromoethanesulfonate (BES). Functionally, involved in aliphatic epoxide carboxylation. Catalyzes the addition of coenzyme M (CoM) to either R- or S-epoxypropane to form the thioether conjugate 2-hydroxypropyl-CoM. Catalyzes the reaction of CoM with R-epoxypropane at a rate approximately twice of that with S-epoxypropane. The CoM analogs 2-mercaptopropionate, 2-mercaptoethanol and cysteine substitute poorly for CoM as the thiol substrate. This chain is 2-hydroxypropyl-CoM lyase, found in Xanthobacter autotrophicus (strain ATCC BAA-1158 / Py2).